A 302-amino-acid chain; its full sequence is Homoserine O-acetyltransferase (302 aa).

The active-site Acyl-thioester intermediate is the cysteine 142. Lysine 163 and serine 192 together coordinate substrate. Residue histidine 235 is the Proton acceptor of the active site. The active site involves glutamate 237. Arginine 249 contacts substrate.

Belongs to the MetA family.

It is found in the cytoplasm. It catalyses the reaction L-homoserine + acetyl-CoA = O-acetyl-L-homoserine + CoA. It functions in the pathway amino-acid biosynthesis; L-methionine biosynthesis via de novo pathway; O-acetyl-L-homoserine from L-homoserine: step 1/1. Functionally, transfers an acetyl group from acetyl-CoA to L-homoserine, forming acetyl-L-homoserine. This chain is Homoserine O-acetyltransferase, found in Bacillus licheniformis (strain ATCC 14580 / DSM 13 / JCM 2505 / CCUG 7422 / NBRC 12200 / NCIMB 9375 / NCTC 10341 / NRRL NRS-1264 / Gibson 46).